The following is a 65-amino-acid chain: Large ribosomal subunit protein uL29 (65 aa).

This sequence belongs to the universal ribosomal protein uL29 family.

This Acinetobacter baylyi (strain ATCC 33305 / BD413 / ADP1) protein is Large ribosomal subunit protein uL29.